A 218-amino-acid chain; its full sequence is 2-C-methyl-D-erythritol 4-phosphate cytidylyltransferase (218 aa).

It belongs to the IspD/TarI cytidylyltransferase family. IspD subfamily.

It catalyses the reaction 2-C-methyl-D-erythritol 4-phosphate + CTP + H(+) = 4-CDP-2-C-methyl-D-erythritol + diphosphate. Its pathway is isoprenoid biosynthesis; isopentenyl diphosphate biosynthesis via DXP pathway; isopentenyl diphosphate from 1-deoxy-D-xylulose 5-phosphate: step 2/6. Catalyzes the formation of 4-diphosphocytidyl-2-C-methyl-D-erythritol from CTP and 2-C-methyl-D-erythritol 4-phosphate (MEP). The polypeptide is 2-C-methyl-D-erythritol 4-phosphate cytidylyltransferase (Chlamydia muridarum (strain MoPn / Nigg)).